A 252-amino-acid chain; its full sequence is UPF0714 protein YndL (252 aa).

A helical transmembrane segment spans residues I33 to A51.

This sequence belongs to the UPF0714 family.

It is found in the cell membrane. This chain is UPF0714 protein YndL (yndL), found in Bacillus subtilis (strain 168).